Reading from the N-terminus, the 59-residue chain is Sec-independent protein translocase protein TatA 1 (59 aa).

Residues 3-23 (FPLPWQLILILLVILVIFGAS) form a helical membrane-spanning segment.

This sequence belongs to the TatA/E family. Forms a complex with TatC.

It is found in the cell inner membrane. In terms of biological role, part of the twin-arginine translocation (Tat) system that transports large folded proteins containing a characteristic twin-arginine motif in their signal peptide across membranes. TatA could form the protein-conducting channel of the Tat system. The chain is Sec-independent protein translocase protein TatA 1 from Aquifex aeolicus (strain VF5).